The following is a 465-amino-acid chain: Nuclear pore complex protein NUP50B (465 aa).

Disordered stretches follow at residues Met1–Thr44 and Arg59–His244. The residue at position 2 (Gly2) is an N-acetylglycine. A compositionally biased stretch (acidic residues) spans Gly26–Ser35. Residues Pro81–Pro97 are compositionally biased toward low complexity. 3 stretches are compositionally biased toward basic and acidic residues: residues Thr105–Ala127, Ile141–Ser157, and Thr216–Gly233. Phosphoserine is present on Ser125. 3 tandem repeats follow at residues Phe266–Gly267, Phe286–Gly287, and Phe297–Gly298. The interval Phe266–Gly298 is 3 X 2 AA repeats of F-G. Disordered regions lie at residues Lys308 to Asn330 and His439 to Ala465. Thr455 carries the phosphothreonine modification. A compositionally biased stretch (polar residues) spans Pro456–Ala465. The residue at position 459 (Ser459) is a Phosphoserine.

As to quaternary structure, part of the nuclear pore complex (NPC). The NPC has an eight-fold symmetrical structure comprising a central transport channel and two rings, the cytoplasmic and nuclear rings, to which eight filaments are attached. The cytoplasmic filaments have loose ends, while the nuclear filaments are joined in a distal ring, forming a nuclear basket. NPCs are highly dynamic in configuration and composition, and can be devided in 3 subcomplexes, the NUP62 subcomplex, the NUP107-160 subcomplex and the NUP93 subcomplex, containing approximately 30 different nucleoporin proteins.

The protein resides in the nucleus. The protein localises to the nucleoplasm. It is found in the nuclear pore complex. Functionally, probably involved in nucleocytoplasmic transport via its interactions with importins and Ran, rather than by forming part of the nuclear pore complex (NPC) scaffolding. In Arabidopsis thaliana (Mouse-ear cress), this protein is Nuclear pore complex protein NUP50B.